The following is a 225-amino-acid chain: NAD(P)H-quinone oxidoreductase subunit K, chloroplastic (225 aa).

The [4Fe-4S] cluster site is built by Cys43, Cys44, Cys108, and Cys139.

It belongs to the complex I 20 kDa subunit family. In terms of assembly, NDH is composed of at least 16 different subunits, 5 of which are encoded in the nucleus. It depends on [4Fe-4S] cluster as a cofactor.

Its subcellular location is the plastid. It is found in the chloroplast thylakoid membrane. The enzyme catalyses a plastoquinone + NADH + (n+1) H(+)(in) = a plastoquinol + NAD(+) + n H(+)(out). The catalysed reaction is a plastoquinone + NADPH + (n+1) H(+)(in) = a plastoquinol + NADP(+) + n H(+)(out). Functionally, NDH shuttles electrons from NAD(P)H:plastoquinone, via FMN and iron-sulfur (Fe-S) centers, to quinones in the photosynthetic chain and possibly in a chloroplast respiratory chain. The immediate electron acceptor for the enzyme in this species is believed to be plastoquinone. Couples the redox reaction to proton translocation, and thus conserves the redox energy in a proton gradient. This Nandina domestica (Heavenly bamboo) protein is NAD(P)H-quinone oxidoreductase subunit K, chloroplastic.